We begin with the raw amino-acid sequence, 419 residues long: Peptide chain release factor subunit 1 (419 aa).

This sequence belongs to the eukaryotic release factor 1 family. Heterodimer of two subunits, one of which binds GTP.

The protein resides in the cytoplasm. Its function is as follows. Directs the termination of nascent peptide synthesis (translation) in response to the termination codons UAA, UAG and UGA. The polypeptide is Peptide chain release factor subunit 1 (Methanococcus vannielii (strain ATCC 35089 / DSM 1224 / JCM 13029 / OCM 148 / SB)).